Consider the following 409-residue polypeptide: uncharacterized protein (409 aa).

The region spanning 1 to 209 (MRVFVARQPI…GHDLSTHFYS (209 aa)) is the EAL domain. Residues 203–392 (LSTHFYSYYE…GNQLDKEEAY (190 aa)) enclose the HDOD domain.

This is an uncharacterized protein from Bacillus subtilis (strain 168).